A 794-amino-acid chain; its full sequence is Phosphoribosylformylglycinamidine synthase subunit PurL (794 aa).

Histidine 47 is an active-site residue. Tyrosine 50 and lysine 89 together coordinate ATP. Glutamate 91 contributes to the Mg(2+) binding site. Residues 92 to 95 and arginine 114 each bind substrate; that span reads SHNH. The active-site Proton acceptor is the histidine 93. Aspartate 115 provides a ligand contact to Mg(2+). Glutamine 238 is a binding site for substrate. Residue aspartate 266 participates in Mg(2+) binding. Residue 310–312 coordinates substrate; it reads ESQ. The ATP site is built by aspartate 522 and glycine 559. Position 560 (asparagine 560) interacts with Mg(2+). Serine 562 is a binding site for substrate.

Belongs to the FGAMS family. Monomer. Part of the FGAM synthase complex composed of 1 PurL, 1 PurQ and 2 PurS subunits.

The protein localises to the cytoplasm. The enzyme catalyses N(2)-formyl-N(1)-(5-phospho-beta-D-ribosyl)glycinamide + L-glutamine + ATP + H2O = 2-formamido-N(1)-(5-O-phospho-beta-D-ribosyl)acetamidine + L-glutamate + ADP + phosphate + H(+). It participates in purine metabolism; IMP biosynthesis via de novo pathway; 5-amino-1-(5-phospho-D-ribosyl)imidazole from N(2)-formyl-N(1)-(5-phospho-D-ribosyl)glycinamide: step 1/2. In terms of biological role, part of the phosphoribosylformylglycinamidine synthase complex involved in the purines biosynthetic pathway. Catalyzes the ATP-dependent conversion of formylglycinamide ribonucleotide (FGAR) and glutamine to yield formylglycinamidine ribonucleotide (FGAM) and glutamate. The FGAM synthase complex is composed of three subunits. PurQ produces an ammonia molecule by converting glutamine to glutamate. PurL transfers the ammonia molecule to FGAR to form FGAM in an ATP-dependent manner. PurS interacts with PurQ and PurL and is thought to assist in the transfer of the ammonia molecule from PurQ to PurL. In Prochlorococcus marinus (strain MIT 9313), this protein is Phosphoribosylformylglycinamidine synthase subunit PurL.